The sequence spans 324 residues: CIMIP2 protein GA14893 (324 aa).

It belongs to the CIMIP2 family.

It localises to the cytoplasm. It is found in the cytoskeleton. The protein resides in the cilium axoneme. Probable microtubule inner protein (MIP) part of the dynein-decorated doublet microtubules (DMTs) in cilium axoneme. This chain is CIMIP2 protein GA14893, found in Drosophila pseudoobscura pseudoobscura (Fruit fly).